A 341-amino-acid polypeptide reads, in one-letter code: Tetraacyldisaccharide 4'-kinase (341 aa).

54–61 (TVGGAGKT) contributes to the ATP binding site.

This sequence belongs to the LpxK family.

It carries out the reaction a lipid A disaccharide + ATP = a lipid IVA + ADP + H(+). Its pathway is glycolipid biosynthesis; lipid IV(A) biosynthesis; lipid IV(A) from (3R)-3-hydroxytetradecanoyl-[acyl-carrier-protein] and UDP-N-acetyl-alpha-D-glucosamine: step 6/6. Transfers the gamma-phosphate of ATP to the 4'-position of a tetraacyldisaccharide 1-phosphate intermediate (termed DS-1-P) to form tetraacyldisaccharide 1,4'-bis-phosphate (lipid IVA). The protein is Tetraacyldisaccharide 4'-kinase of Brucella melitensis biotype 2 (strain ATCC 23457).